We begin with the raw amino-acid sequence, 646 residues long: Hexon protein p72 (646 aa).

This sequence belongs to the NCLDV major capsid protein family. As to quaternary structure, homotrimer. The membrane-bound form, but not the cytosolic one, assembles into large complexes. Interacts with the minor capsid proteins M1249L and p17; these interactions form a rigid zipper structure that stabilizes the capsomers.

The protein resides in the virion. It localises to the host endoplasmic reticulum membrane. Its subcellular location is the host cytoplasm. The protein localises to the host cytosol. In terms of biological role, capsid protein that self-assembles to form the pseudo-hexameric capsomers of the icosahedral capsid. The capsid is constructed of 2760 pseudo-hexameric capsomers and 12 pentameric capsomers, with a T=277 symmetry, about 200 nm in diameter. The capsid encapsulates the DNA-containing nucleoid, the core shell and the inner membrane. Plays an essential role in virion assembly. Involved in virus attachment to the host cell. The protein is Hexon protein p72 of Ornithodoros (relapsing fever ticks).